The sequence spans 439 residues: Thymidine phosphorylase (439 aa).

The protein belongs to the thymidine/pyrimidine-nucleoside phosphorylase family. As to quaternary structure, homodimer.

It carries out the reaction thymidine + phosphate = 2-deoxy-alpha-D-ribose 1-phosphate + thymine. Its pathway is pyrimidine metabolism; dTMP biosynthesis via salvage pathway; dTMP from thymine: step 1/2. The enzymes which catalyze the reversible phosphorolysis of pyrimidine nucleosides are involved in the degradation of these compounds and in their utilization as carbon and energy sources, or in the rescue of pyrimidine bases for nucleotide synthesis. The polypeptide is Thymidine phosphorylase (Mesorhizobium japonicum (strain LMG 29417 / CECT 9101 / MAFF 303099) (Mesorhizobium loti (strain MAFF 303099))).